The following is a 288-amino-acid chain: POU domain class 2-associating factor 2 (288 aa).

The OCA domain maps to 10–32 (KRVYQGVRVKHTVKDLLAEKRSG). 2 disordered regions span residues 24–52 (DLLA…PFVQ) and 247–274 (PPKV…VKED). The span at 35 to 48 (SNSRLNGSVSSSQS) shows a compositional bias: low complexity.

It belongs to the POU2AF family. As to quaternary structure, interacts with POU2F3 (via the POU domain) in a DNA-dependent manner; this interaction recruits POU2AF2 to chromatin and increases POU2F3 transactivation activity. In terms of tissue distribution, expressed in tuft cells of colon mucosa, as well as in small intestine and thymus.

Its subcellular location is the cytoplasm. The protein localises to the cytosol. It localises to the nucleus. Functionally, transcriptional coactivator of POU2F3. This complex drives the development of tuft cells, a rare chemosensory cells that coordinate immune and neural functions within mucosal epithelial tissues. The sequence is that of POU domain class 2-associating factor 2 from Homo sapiens (Human).